The chain runs to 304 residues: Caspase-6 (304 aa).

Positions 1-29 (MSGAERRPAAGRVQLDSKPTPTTTADGNQ) are disordered. Residues 1-35 (MSGAERRPAAGRVQLDSKPTPTTTADGNQNITEVD) constitute a propeptide that is removed on maturation. The span at 17-29 (SKPTPTTTADGNQ) shows a compositional bias: polar residues. The tri-arginine exosite stretch occupies residues 54 to 56 (QRR). His-133 is an active-site residue. The interval 137–154 (DHVYAYDAQIKIETITNM) is 130's region. The active site involves Cys-175. A propeptide spanning residues 192-204 (SKDETTVNQTEVD) is cleaved from the precursor.

Belongs to the peptidase C14A family. Heterotetramer that consists of two anti-parallel arranged heterodimers, each one formed by a 18 kDa (p18) and a 11 kDa (p11) subunit. In terms of assembly, heterotetramer that consists of two anti-parallel arranged heterodimers, each one formed by a 18 kDa (Caspase-6 subunit p18) and a 11 kDa (Caspase-6 subunit p11) subunit. Widely expressed.

It localises to the cytoplasm. The protein resides in the nucleus. The enzyme catalyses Strict requirement for Asp at position P1 and has a preferred cleavage sequence of Val-Glu-His-Asp-|-.. With respect to regulation, during activation, the N-terminal prodomain is removed by cleavage. Concomitantly, double cleavage gives rise to a large 18-kDa and a small 11-kDa subunit. The two large and two small subunits then assemble to form the active CASP6 complex. Intramolecular cleavage at Asp-191 is a prerequisite for CASP6 self-activation. Cysteine protease that plays essential roles in programmed cell death, development and innate immunity. Acts as a non-canonical executioner caspase during apoptosis: localizes in the nucleus and cleaves the nuclear structural protein lamin-A/LMNA thereby inducing nuclear shrinkage and fragmentation. Lamin-A/LMNA cleavage is required for chromatin condensation and nuclear disassembly during apoptotic execution. Plays an essential role in defense against viruses by acting as a central mediator of the ZBP1-mediated pyroptosis, apoptosis, and necroptosis (PANoptosis), independently of its cysteine protease activity. PANoptosis is a unique inflammatory programmed cell death, which provides a molecular scaffold that allows the interactions and activation of machinery required for inflammasome/pyroptosis, apoptosis and necroptosis. In Gallus gallus (Chicken), this protein is Caspase-6.